An 81-amino-acid chain; its full sequence is Putative membrane protein insertion efficiency factor (81 aa).

A disordered region spans residues 61–81 (NPGGYDPVPPIPTSRSSSMAE).

Belongs to the UPF0161 family.

It localises to the cell inner membrane. Could be involved in insertion of integral membrane proteins into the membrane. This Pseudomonas fluorescens (strain Pf0-1) protein is Putative membrane protein insertion efficiency factor.